The primary structure comprises 543 residues: Exodeoxyribonuclease 7 large subunit (543 aa).

Positions 498–543 are disordered; the sequence is VTGEGDKASPPPQAASATTTPAPGRPNPLPKSPKKSEPPAGQGSLF.

Belongs to the XseA family. In terms of assembly, heterooligomer composed of large and small subunits.

The protein localises to the cytoplasm. It carries out the reaction Exonucleolytic cleavage in either 5'- to 3'- or 3'- to 5'-direction to yield nucleoside 5'-phosphates.. Functionally, bidirectionally degrades single-stranded DNA into large acid-insoluble oligonucleotides, which are then degraded further into small acid-soluble oligonucleotides. This chain is Exodeoxyribonuclease 7 large subunit, found in Allorhizobium ampelinum (strain ATCC BAA-846 / DSM 112012 / S4) (Agrobacterium vitis (strain S4)).